The primary structure comprises 487 residues: MAGTNALLMLENFIDGKFLPCSSYIDSYDPSTGEVYCRVPNSGKDEIEAAVKAAREAFPSWSSRSPQERSRVLNQVADLLEQSLEEFAQAESKDQGKTLALARTMDIPRSVQNFRFFASSSLHHTSECTQMDHLGCMHYTVRAPVGVAGLISPWNLPLYLLTWKIAPAMAAGNTVIAKPSELTSVTAWMLCKLLDKAGVPPGVVNIVFGTGPRVGEALVSHPEVPLISFTGSQPTAERITQLSAPHCKKLSLELGGKNPAIIFEDANLDECIPATVRSSFANQGEICLCTSRIFVQKSIYSEFLKRFVEATRKWKVGIPSDPLVSIGALISKAHLEKVRSYVKRALAEGAQIWCGEGVDKLSLPARNQAGYFMLPTVITDIKDESCCMTEEIFGPVTCVVPFDSEEEVIERANNVKYGLAATVWSSNVGRVHRVAKKLQSGLVWTNCWLIRELNLPFGGMKSSGIGREGAKDSYDFFTEIKTITVKH.

209–215 (GTGPRVG) serves as a coordination point for NAD(+). The Proton acceptor role is filled by Glu-253. Cys-287 (nucleophile) is an active-site residue. Ser-362 is subject to Phosphoserine.

The protein belongs to the aldehyde dehydrogenase family. As to expression, highly expressed in adult kidney and liver. Detected at lower levels in fetal liver and kidney.

It localises to the cytoplasm. The enzyme catalyses 2-aminomuconate 6-semialdehyde + NAD(+) + H2O = (2Z,4E)-2-aminomuconate + NADH + 2 H(+). Its pathway is amino-acid degradation; L-kynurenine degradation. Functionally, catalyzes the NAD-dependent oxidation of 2-aminomuconic semialdehyde of the kynurenine metabolic pathway in L-tryptophan degradation. The polypeptide is 2-aminomuconic semialdehyde dehydrogenase (Homo sapiens (Human)).